A 642-amino-acid chain; its full sequence is 1-deoxy-D-xylulose-5-phosphate synthase (642 aa).

Thiamine diphosphate is bound by residues H73 and 114–116 (SHA). D145 contacts Mg(2+). Thiamine diphosphate is bound by residues 146–147 (GA), N175, F286, and E367. N175 is a Mg(2+) binding site.

Belongs to the transketolase family. DXPS subfamily. As to quaternary structure, homodimer. Mg(2+) is required as a cofactor. Thiamine diphosphate serves as cofactor.

The enzyme catalyses D-glyceraldehyde 3-phosphate + pyruvate + H(+) = 1-deoxy-D-xylulose 5-phosphate + CO2. The protein operates within metabolic intermediate biosynthesis; 1-deoxy-D-xylulose 5-phosphate biosynthesis; 1-deoxy-D-xylulose 5-phosphate from D-glyceraldehyde 3-phosphate and pyruvate: step 1/1. Functionally, catalyzes the acyloin condensation reaction between C atoms 2 and 3 of pyruvate and glyceraldehyde 3-phosphate to yield 1-deoxy-D-xylulose-5-phosphate (DXP). The protein is 1-deoxy-D-xylulose-5-phosphate synthase of Saccharopolyspora erythraea (strain ATCC 11635 / DSM 40517 / JCM 4748 / NBRC 13426 / NCIMB 8594 / NRRL 2338).